Reading from the N-terminus, the 195-residue chain is Peptidyl-tRNA hydrolase (195 aa).

A tRNA-binding site is contributed by Tyr17. His22 serves as the catalytic Proton acceptor. TRNA is bound by residues Phe68, Asn70, and Asn116.

This sequence belongs to the PTH family. In terms of assembly, monomer.

Its subcellular location is the cytoplasm. It catalyses the reaction an N-acyl-L-alpha-aminoacyl-tRNA + H2O = an N-acyl-L-amino acid + a tRNA + H(+). In terms of biological role, hydrolyzes ribosome-free peptidyl-tRNAs (with 1 or more amino acids incorporated), which drop off the ribosome during protein synthesis, or as a result of ribosome stalling. Functionally, catalyzes the release of premature peptidyl moieties from peptidyl-tRNA molecules trapped in stalled 50S ribosomal subunits, and thus maintains levels of free tRNAs and 50S ribosomes. This chain is Peptidyl-tRNA hydrolase, found in Pectobacterium carotovorum subsp. carotovorum (strain PC1).